A 224-amino-acid chain; its full sequence is Holliday junction branch migration complex subunit RuvA (224 aa).

Residues 1–64 (MIGRLSGVLV…EDLLQLYGFP (64 aa)) form a domain I region. The tract at residues 65 to 143 (TLLEKEWHRL…EVMAMGGTLE (79 aa)) is domain II. Residues 144–171 (AALDGVIEDGMAASEGIEPPSAARPAVP) are flexible linker. The domain III stretch occupies residues 172–224 (SAASDQAGALSALVNLGYGQGEAASAVATAAGEGAVGETDIIRAALRLLAPKG).

It belongs to the RuvA family. Homotetramer. Forms an RuvA(8)-RuvB(12)-Holliday junction (HJ) complex. HJ DNA is sandwiched between 2 RuvA tetramers; dsDNA enters through RuvA and exits via RuvB. An RuvB hexamer assembles on each DNA strand where it exits the tetramer. Each RuvB hexamer is contacted by two RuvA subunits (via domain III) on 2 adjacent RuvB subunits; this complex drives branch migration. In the full resolvosome a probable DNA-RuvA(4)-RuvB(12)-RuvC(2) complex forms which resolves the HJ.

Its subcellular location is the cytoplasm. Its function is as follows. The RuvA-RuvB-RuvC complex processes Holliday junction (HJ) DNA during genetic recombination and DNA repair, while the RuvA-RuvB complex plays an important role in the rescue of blocked DNA replication forks via replication fork reversal (RFR). RuvA specifically binds to HJ cruciform DNA, conferring on it an open structure. The RuvB hexamer acts as an ATP-dependent pump, pulling dsDNA into and through the RuvAB complex. HJ branch migration allows RuvC to scan DNA until it finds its consensus sequence, where it cleaves and resolves the cruciform DNA. The chain is Holliday junction branch migration complex subunit RuvA from Dinoroseobacter shibae (strain DSM 16493 / NCIMB 14021 / DFL 12).